The following is a 1335-amino-acid chain: Phospholipid-transporting ATPase IK (1335 aa).

Residues 1–74 lie on the Cytoplasmic side of the membrane; it reads MDGVHLGENL…LYEQFHRMSN (74 aa). A helical transmembrane segment spans residues 75-95; that stretch reads LYFLFIIILQGIPEISTLPWF. Topologically, residues 96 to 295 are exoplasmic loop; it reads TLFAPLVCLF…LDLMMNKLVA (200 aa). A helical transmembrane segment spans residues 296–316; it reads LIFLSLVIASLLLTVGFTFMV. Topologically, residues 317-339 are cytoplasmic; sequence KQFKAKHYYMSPTHGRSDAMESF. A helical transmembrane segment spans residues 340-360; it reads FIFWGFLILLSVMVPMAMFII. The Exoplasmic loop portion of the chain corresponds to 361–917; sequence AEFIYLGNSI…YMRVCKFLRY (557 aa). D407 functions as the 4-aspartylphosphate intermediate in the catalytic mechanism. ATP is bound by residues D407, K408, T409, E504, F545, K568, R601, T681, G682, D683, R831, and K837. D407 is a Mg(2+) binding site. Mg(2+) is bound at residue T409. Position 857 (D857) interacts with Mg(2+). ATP is bound by residues N860 and D861. Position 861 (D861) interacts with Mg(2+). Residues 918-938 form a helical membrane-spanning segment; that stretch reads FFYKTVASMMAQIWFSLVNGF. The Cytoplasmic portion of the chain corresponds to 939-946; sequence SAQPLYEG. Residues 947 to 967 form a helical membrane-spanning segment; the sequence is WFLALFNLLYSTLPVLYIGLF. Topologically, residues 968 to 995 are exoplasmic loop; sequence EQDVTAEKSLKMPELYMAGQKGELFNYS. Residues 996–1016 traverse the membrane as a helical segment; it reads IFMQAITHGTITSMINFFVTV. Topologically, residues 1017-1033 are cytoplasmic; that stretch reads MVSSDMSKAGSSHDYQS. A helical transmembrane segment spans residues 1034–1054; that stretch reads LGVLVAISSLLSVTLEVMLVV. A topological domain (exoplasmic loop) is located at residue K1055. The chain crosses the membrane as a helical span at residues 1056–1076; the sequence is YWTLLFVGAVVLSLSSYVLMT. The Cytoplasmic segment spans residues 1077 to 1104; the sequence is SLTQSLWMYRISPKTFPFLFADYNVLFE. A helical membrane pass occupies residues 1105 to 1125; sequence PCSLLLIVLNVALNVLPMLAL. The Exoplasmic loop portion of the chain corresponds to 1126–1335; sequence RTIHRTVLKQ…SQLEVPRKQS (210 aa). Disordered stretches follow at residues 1192-1215, 1236-1280, and 1314-1335; these read VDDSDGGTVCESLNPPEEDIPLQN, FGKG…GKLL, and SPLWRDSASSSPSQLEVPRKQS. Polar residues-rich tracts occupy residues 1246–1255 and 1266–1276; these read PNTSSQTMEK and QKLPTTTSATS.

Belongs to the cation transport ATPase (P-type) (TC 3.A.3) family. Type IV subfamily. It depends on Mg(2+) as a cofactor. As to expression, expressed in testis, specifically in spermatids within seminiferous tubules (at protein level).

The protein resides in the cytoplasmic vesicle. The protein localises to the secretory vesicle. It is found in the acrosome membrane. It localises to the endoplasmic reticulum membrane. The catalysed reaction is ATP + H2O + phospholipidSide 1 = ADP + phosphate + phospholipidSide 2.. It catalyses the reaction a 1,2-diacyl-sn-glycero-3-phospho-L-serine(out) + ATP + H2O = a 1,2-diacyl-sn-glycero-3-phospho-L-serine(in) + ADP + phosphate + H(+). Functionally, P4-ATPase flippase which catalyzes the hydrolysis of ATP coupled to the transport of aminophospholipids from the outer to the inner leaflet of various membranes and ensures the maintenance of asymmetric distribution of phospholipids. Phospholipid translocation also seems to be implicated in vesicle formation and in uptake of lipid signaling molecules. May be responsible for the maintenance of asymmetric distribution of phosphatidylserine (PS) in spermatozoa membranes. Involved in acrosome reactions and binding of spermatozoa to zona pellucida. This is Phospholipid-transporting ATPase IK from Mus musculus (Mouse).